The primary structure comprises 276 residues: Pre-rRNA-processing protein PNO1 (276 aa).

2 disordered regions span residues Met-1–Glu-39 and Thr-51–Asn-92. 2 stretches are compositionally biased toward polar residues: residues Lys-13–Gln-34 and Thr-51–Leu-75. Residues Gly-197 to Val-249 form the KH domain.

The protein belongs to the PNO1 family. Component of the small ribosomal subunit, ribosomal RNA processing complex (SSU RRP complex).

Its subcellular location is the cytoplasm. It is found in the nucleus. The protein localises to the nucleolus. Required for small ribosomal subunit (SSU) synthesis. Has a role in the processing of early nucleolar and late cytoplasmic pre-RNA species. This Candida albicans (strain SC5314 / ATCC MYA-2876) (Yeast) protein is Pre-rRNA-processing protein PNO1 (PNO1).